A 137-amino-acid polypeptide reads, in one-letter code: Large ribosomal subunit protein uL16 (137 aa).

It belongs to the universal ribosomal protein uL16 family. In terms of assembly, part of the 50S ribosomal subunit.

Its function is as follows. Binds 23S rRNA and is also seen to make contacts with the A and possibly P site tRNAs. The chain is Large ribosomal subunit protein uL16 from Solidesulfovibrio magneticus (strain ATCC 700980 / DSM 13731 / RS-1) (Desulfovibrio magneticus).